A 475-amino-acid polypeptide reads, in one-letter code: Pentatricopeptide repeat-containing protein At1g29710, mitochondrial (475 aa).

A mitochondrion-targeting transit peptide spans 1-37 (MVRLWCGKLRLWKPYLALATQSRNSWFCSGGGAPSHH). PPR repeat units lie at residues 83–117 (AQNV…GYAM), 118–148 (DLIR…IIAL), 153–183 (DVGA…MPEW), 184–218 (NSGT…GNKP), 219–254 (NGEI…GIVP), and 255–285 (SMEH…MPME). Residues 350-380 (YFYSTFRPVDSSHPQMNIIYETLMSLRSQLK) form a type E(+) motif region. A type DYW motif region spans residues 381 to 475 (EMGYVPDTRY…NGVCRCNNLW (95 aa)).

It belongs to the PPR family. PCMP-H subfamily.

Its subcellular location is the mitochondrion. The chain is Pentatricopeptide repeat-containing protein At1g29710, mitochondrial (PCMP-H67) from Arabidopsis thaliana (Mouse-ear cress).